A 500-amino-acid chain; its full sequence is NAD(P)H-quinone oxidoreductase chain 4, chloroplastic (500 aa).

14 consecutive transmembrane segments (helical) span residues 4 to 24 (FPWL…IFFL), 37 to 57 (MSIC…HFQL), 87 to 107 (LGSI…AWPV), 113 to 130 (LFYF…GLFS), 134 to 154 (LLLF…LLSM), 167 to 187 (FILY…GMGL), 211 to 231 (ILFY…IPLH), 242 to 262 (HYST…YGLI), 272 to 292 (AHYL…IYAA), 313 to 333 (MGFI…GAIL), 334 to 354 (QILS…TACD), 386 to 406 (LALP…GLIT), 417 to 437 (LITF…LSML), and 462 to 482 (LFLL…PDFV).

The protein belongs to the complex I subunit 4 family.

Its subcellular location is the plastid. It is found in the chloroplast thylakoid membrane. It catalyses the reaction a plastoquinone + NADH + (n+1) H(+)(in) = a plastoquinol + NAD(+) + n H(+)(out). The catalysed reaction is a plastoquinone + NADPH + (n+1) H(+)(in) = a plastoquinol + NADP(+) + n H(+)(out). In Oryza nivara (Indian wild rice), this protein is NAD(P)H-quinone oxidoreductase chain 4, chloroplastic.